The chain runs to 194 residues: Fe/S biogenesis protein NfuA (194 aa).

Positions 151 and 154 each coordinate [4Fe-4S] cluster.

Belongs to the NfuA family. As to quaternary structure, homodimer. [4Fe-4S] cluster serves as cofactor.

Its function is as follows. Involved in iron-sulfur cluster biogenesis. Binds a 4Fe-4S cluster, can transfer this cluster to apoproteins, and thereby intervenes in the maturation of Fe/S proteins. Could also act as a scaffold/chaperone for damaged Fe/S proteins. In Aliivibrio fischeri (strain ATCC 700601 / ES114) (Vibrio fischeri), this protein is Fe/S biogenesis protein NfuA.